A 424-amino-acid chain; its full sequence is Dihydroorotase (424 aa).

Residues histidine 58 and histidine 60 each coordinate Zn(2+). Substrate contacts are provided by residues 60-62 (HLR), asparagine 92, and asparagine 276. Aspartate 303 lines the Zn(2+) pocket. Residue aspartate 303 is part of the active site. Residues histidine 307 and 321–322 (FG) contribute to the substrate site.

It belongs to the metallo-dependent hydrolases superfamily. DHOase family. Class I DHOase subfamily. It depends on Zn(2+) as a cofactor.

It catalyses the reaction (S)-dihydroorotate + H2O = N-carbamoyl-L-aspartate + H(+). Its pathway is pyrimidine metabolism; UMP biosynthesis via de novo pathway; (S)-dihydroorotate from bicarbonate: step 3/3. Catalyzes the reversible cyclization of carbamoyl aspartate to dihydroorotate. In Staphylococcus aureus (strain COL), this protein is Dihydroorotase.